A 279-amino-acid polypeptide reads, in one-letter code: Thymidylate synthase (279 aa).

133–134 (RR) contributes to the dUMP binding site. Cys154 functions as the Nucleophile in the catalytic mechanism. Residues 178–181 (RSND), Asn189, and 219–221 (HIY) contribute to the dUMP site. Residue Asp181 coordinates (6R)-5,10-methylene-5,6,7,8-tetrahydrofolate. Ala278 lines the (6R)-5,10-methylene-5,6,7,8-tetrahydrofolate pocket.

Belongs to the thymidylate synthase family. Bacterial-type ThyA subfamily. In terms of assembly, homodimer.

It localises to the cytoplasm. The enzyme catalyses dUMP + (6R)-5,10-methylene-5,6,7,8-tetrahydrofolate = 7,8-dihydrofolate + dTMP. Its pathway is pyrimidine metabolism; dTTP biosynthesis. Catalyzes the reductive methylation of 2'-deoxyuridine-5'-monophosphate (dUMP) to 2'-deoxythymidine-5'-monophosphate (dTMP) while utilizing 5,10-methylenetetrahydrofolate (mTHF) as the methyl donor and reductant in the reaction, yielding dihydrofolate (DHF) as a by-product. This enzymatic reaction provides an intracellular de novo source of dTMP, an essential precursor for DNA biosynthesis. In Streptococcus pneumoniae (strain 70585), this protein is Thymidylate synthase.